The sequence spans 517 residues: Tyrosine-protein kinase Fgr (517 aa).

G2 is lipidated: N-myristoyl glycine. Residues C3 and C6 are each lipidated (S-palmitoyl cysteine). S13 bears the Phosphoserine mark. Y32 carries the post-translational modification Phosphotyrosine. S50 carries the post-translational modification Phosphoserine. The SH3 domain maps to 65–126; it reads TGVTIFVALY…PSNYVAPVDS (62 aa). The tract at residues 102–103 is interaction with CLNK; sequence WW. One can recognise an SH2 domain in the interval 132–229; it reads WYFGKISRKD…GLCYLLTAPC (98 aa). Y196 is subject to Phosphotyrosine. S206 carries the post-translational modification Phosphoserine. One can recognise a Protein kinase domain in the interval 251 to 504; it reads IALERRLGTG…YLQSFLEDYF (254 aa). Residues 257–265 and K279 contribute to the ATP site; that span reads LGTGCFGDV. Residue D370 is the Proton acceptor of the active site. Position 400 is a phosphotyrosine (Y400). Phosphotyrosine; by SRC is present on Y511.

This sequence belongs to the protein kinase superfamily. Tyr protein kinase family. SRC subfamily. Interacts with ITGB1, ITGB2, MS4A2/FCER1B, FCER1G and FCGR2. Interacts (via SH2 domain) with SYK (tyrosine phosphorylated). Interacts (via SH2 domain) with FLT3 (tyrosine phosphorylated). Interacts with PTK2/FAK1. Interacts (via SH2 domain) with HCLS1 (tyrosine phosphorylated by SYK). Interacts with SIRPA and PTPNS1. Interacts (not phosphorylated on tyrosine residues) with CBL; FGR tyrosine phosphorylation promotes dissociation. Interacts with CLNK. Ubiquitinated. Becomes ubiquitinated in response to ITGB2 signaling; this does not lead to degradation. In terms of processing, phosphorylated. Autophosphorylated on tyrosine residues. Becomes phosphorylated in response to FCGR2 engagement, cell adhesion and signaling by ITGB2. Prior phosphorylation at Tyr-511 by SRC inhibits ulterior autophosphorylation at Tyr-400. Expressed in natural killer cells (at protein level).

Its subcellular location is the cell membrane. It localises to the cell projection. The protein localises to the ruffle membrane. It is found in the cytoplasm. The protein resides in the cytosol. Its subcellular location is the cytoskeleton. It localises to the mitochondrion inner membrane. The protein localises to the mitochondrion intermembrane space. It catalyses the reaction L-tyrosyl-[protein] + ATP = O-phospho-L-tyrosyl-[protein] + ADP + H(+). With respect to regulation, activated by autophosphorylation. Prior phosphorylation at Tyr-511 by SRC inhibits ulterior autophosphorylation at Tyr-400. Activated by phorbol myristate acetate, phosphatidic acid and poly-Lys. Binding (via SH2 domain) of HCLS1 that is already phosphorylated by SYK strongly increases kinase activity. In terms of biological role, non-receptor tyrosine-protein kinase that transmits signals from cell surface receptors devoid of kinase activity and contributes to the regulation of immune responses, including neutrophil, monocyte, macrophage and mast cell functions, cytoskeleton remodeling in response to extracellular stimuli, phagocytosis, cell adhesion and migration. Promotes mast cell degranulation, release of inflammatory cytokines and IgE-mediated anaphylaxis. Acts downstream of receptors that bind the Fc region of immunoglobulins, such as MS4A2/FCER1B, FCER1G and FCGR2. Acts downstream of ITGB1 and ITGB2, and regulates actin cytoskeleton reorganization, cell spreading and adhesion. Depending on the context, activates or inhibits cellular responses. Functions as a negative regulator of ITGB2 signaling, phagocytosis and SYK activity in monocytes. Required for normal ITGB1 and ITGB2 signaling, normal cell spreading and adhesion in neutrophils and macrophages. Functions as a positive regulator of cell migration and regulates cytoskeleton reorganization via RAC1 activation. Phosphorylates SYK (in vitro) and promotes SYK-dependent activation of AKT1 and MAP kinase signaling. Phosphorylates PLD2 in antigen-stimulated mast cells, leading to PLD2 activation and the production of the signaling molecules lysophosphatidic acid and diacylglycerol. Promotes activation of PIK3R1. Phosphorylates FASLG, and thereby regulates its ubiquitination and subsequent internalization. Phosphorylates ABL1. Promotes phosphorylation of CBL, CTTN, PIK3R1, PTK2/FAK1, PTK2B/PYK2 and VAV2. Phosphorylates HCLS1 that has already been phosphorylated by SYK, but not unphosphorylated HCLS1. Together with CLNK, it acts as a negative regulator of natural killer cell-activating receptors and inhibits interferon-gamma production. In Mus musculus (Mouse), this protein is Tyrosine-protein kinase Fgr (Fgr).